Consider the following 800-residue polypeptide: DNA topoisomerase 4 subunit A (800 aa).

Residues 31-495 (LPDVRDGLKP…EIEEIKIDKE (465 aa)) form the Topo IIA-type catalytic domain. Y119 functions as the O-(5'-phospho-DNA)-tyrosine intermediate in the catalytic mechanism.

Belongs to the type II topoisomerase GyrA/ParC subunit family. ParC type 2 subfamily. As to quaternary structure, heterotetramer composed of ParC and ParE.

Its subcellular location is the cell membrane. The catalysed reaction is ATP-dependent breakage, passage and rejoining of double-stranded DNA.. Topoisomerase IV is essential for chromosome segregation. It relaxes supercoiled DNA. Performs the decatenation events required during the replication of a circular DNA molecule. This is DNA topoisomerase 4 subunit A from Staphylococcus aureus (strain NCTC 8325 / PS 47).